The following is a 386-amino-acid chain: ATP phosphoribosyltransferase regulatory subunit (386 aa).

Belongs to the class-II aminoacyl-tRNA synthetase family. HisZ subfamily. As to quaternary structure, heteromultimer composed of HisG and HisZ subunits.

The protein resides in the cytoplasm. Its pathway is amino-acid biosynthesis; L-histidine biosynthesis; L-histidine from 5-phospho-alpha-D-ribose 1-diphosphate: step 1/9. Its function is as follows. Required for the first step of histidine biosynthesis. May allow the feedback regulation of ATP phosphoribosyltransferase activity by histidine. The protein is ATP phosphoribosyltransferase regulatory subunit of Limosilactobacillus fermentum (strain NBRC 3956 / LMG 18251) (Lactobacillus fermentum).